We begin with the raw amino-acid sequence, 603 residues long: Probable potassium transport system protein Kup (603 aa).

12 helical membrane-spanning segments follow: residues 15 to 35 (GLVF…IFLL), 43 to 63 (IIGV…VEYA), 94 to 114 (VAFV…DGVI), 135 to 155 (NIGQ…LFSV), 163 to 183 (ITWV…FSGI), 209 to 229 (GIIG…GEAL), 244 to 264 (AWRF…AFLI), 283 to 303 (ILYI…SQAM), 336 to 356 (IYIS…MLIF), 365 to 385 (AYGL…TSIF), 390 to 410 (NITK…FLLS), and 415 to 435 (IPHG…LILI).

This sequence belongs to the HAK/KUP transporter (TC 2.A.72) family.

The protein resides in the cell membrane. It catalyses the reaction K(+)(in) + H(+)(in) = K(+)(out) + H(+)(out). Its function is as follows. Transport of potassium into the cell. Likely operates as a K(+):H(+) symporter. The polypeptide is Probable potassium transport system protein Kup (Methanosarcina barkeri (strain Fusaro / DSM 804)).